The chain runs to 437 residues: MDQRPELLSSMEYVASPDPKPGVPLRVAENVAPGAEDWLPSASGHLAWATSLETEHQTHLELSEEQRLQISKELVDLQIATHHLREQHEAEVFELRREILRLESRVLELELHGNGACQGHKVQPMANLGQHQVPPLEPPGGQQKLQEELKWLLEHHRARQQALETQVGVLSQQLQGAREEARTTGQQLASQAMVLASCKGQLRQAEAENTQLQLQLKKMNEEYAVRLQHYARETVENASSTNQAALQAFLESTLQDIRAAHRTREQQLAQAARTYRKRLADLNQRQELLLTTCRATFATAINLEPLPMHWATELSHPRENEYGRHRTLLLYPEKGSGETSKENKSQPLALDTASWAQIQQRLQDFSQDTQAELERERAQLMVRATMAEQQLSELQEYVDQHLGRYKQEILKLRKLVNIGDPQGVEAVSSPGSGGARL.

3 coiled-coil regions span residues 83-114 (HLREQHEAEVFELRREILRLESRVLELELHGN), 147-287 (EELK…QRQE), and 360-408 (QRLQ…YKQE).

This sequence belongs to the CCDC78 family.

The protein resides in the cytoplasm. The protein localises to the cytoskeleton. It localises to the microtubule organizing center. Its subcellular location is the centrosome. It is found in the centriole. The protein resides in the perinuclear region. The protein localises to the cell membrane. It localises to the sarcolemma. Its subcellular location is the sarcoplasmic reticulum. Its function is as follows. Component of the deuterosome, a structure that promotes de novo centriole amplification in multiciliated cells that can generate more than 100 centrioles. Deuterosome-mediated centriole amplification occurs in terminally differentiated multiciliated cells (G1/0) and not in S phase. Essential for centriole amplification and is required for CEP152 localization to the deuterosome. The sequence is that of Coiled-coil domain-containing protein 78 (Ccdc78) from Mus musculus (Mouse).